We begin with the raw amino-acid sequence, 68 residues long: uncharacterized protein (68 aa).

This is an uncharacterized protein from Saccharomyces cerevisiae (strain ATCC 204508 / S288c) (Baker's yeast).